The primary structure comprises 379 residues: GDP-mannose transporter 1 (379 aa).

Residues 1-39 (MTDNRKPEDYTIEMDKLGQNKNYQAPPPPPQPRSSTASS) are Cytoplasmic-facing. Positions 17 to 38 (LGQNKNYQAPPPPPQPRSSTAS) are disordered. Residues 40-60 (ISNNAALSVLAYCGSSILMTV) form a helical membrane-spanning segment. Over 61 to 69 (MNKYVLSSD) the chain is Lumenal. The chain crosses the membrane as a helical span at residues 70–90 (FNLNFFLLCVQSLVCIIAIQL). The Cytoplasmic segment spans residues 91–110 (CKACGLITYRDFNLDEARKW). The chain crosses the membrane as a helical span at residues 111–133 (FPITLLLIGMIYTGSKALQFLSI). Topologically, residues 134–136 (PVY) are lumenal. The helical transmembrane segment at 137–156 (TIFKNLTIILIAYGEVLWFG) threads the bilayer. Residues 157–162 (GSVTNL) lie on the Cytoplasmic side of the membrane. A helical membrane pass occupies residues 163–182 (TLFSFGLMVFSSIIAAWADI). At 183–198 (KHAIESSGDATSKVST) the chain is on the lumenal side. The helical transmembrane segment at 199–219 (LNAGYIWMLINCLCTSSYVLG) threads the bilayer. Over 220 to 233 (MRKRIKLTNFKDFD) the chain is Cytoplasmic. A helical membrane pass occupies residues 234–254 (TMFYNNLLSIPVLIVCSGILE). Residues 255 to 272 (DWSPANVARNFPSADRNG) lie on the Lumenal side of the membrane. The helical transmembrane segment at 273-293 (IMFAMILSGLSTVFISYTSAW) threads the bilayer. Topologically, residues 294–301 (CVRVTSST) are cytoplasmic. A helical membrane pass occupies residues 302–322 (TYSMVGALNKLPIALSGLIFF). The Lumenal portion of the chain corresponds to 323–325 (DAP). The helical transmembrane segment at 326 to 346 (VTFPSVSAIMVGFVSGIVYAV) threads the bilayer. Residues 347–379 (AKIKQNAKPKVGILPTTNPVSASSQSMRDSLRS) lie on the Cytoplasmic side of the membrane.

It belongs to the TPT transporter family. SLC35D subfamily. As to quaternary structure, homooligomer.

It localises to the golgi apparatus membrane. It is found in the cytoplasmic vesicle membrane. The protein resides in the endoplasmic reticulum membrane. In terms of biological role, involved in the import of GDP-mannose from the cytoplasm into the Golgi lumen. In Emericella nidulans (strain FGSC A4 / ATCC 38163 / CBS 112.46 / NRRL 194 / M139) (Aspergillus nidulans), this protein is GDP-mannose transporter 1 (gmt1).